Consider the following 525-residue polypeptide: GMP synthase [glutamine-hydrolyzing] (525 aa).

In terms of domain architecture, Glutamine amidotransferase type-1 spans 12–206 (RILIIDFGSQ…THGICGCGGD (195 aa)). Cys90 serves as the catalytic Nucleophile. Catalysis depends on residues His180 and Glu182. Residues 207 to 399 (WTMAAFKDQA…LGLPDEMVGR (193 aa)) enclose the GMPS ATP-PPase domain. 234–240 (SGGVDSS) provides a ligand contact to ATP.

As to quaternary structure, homodimer.

It carries out the reaction XMP + L-glutamine + ATP + H2O = GMP + L-glutamate + AMP + diphosphate + 2 H(+). It participates in purine metabolism; GMP biosynthesis; GMP from XMP (L-Gln route): step 1/1. Its function is as follows. Catalyzes the synthesis of GMP from XMP. This chain is GMP synthase [glutamine-hydrolyzing], found in Rhodospirillum rubrum (strain ATCC 11170 / ATH 1.1.1 / DSM 467 / LMG 4362 / NCIMB 8255 / S1).